Here is a 464-residue protein sequence, read N- to C-terminus: NADH-ubiquinone oxidoreductase chain 4 (464 aa).

Transmembrane regions (helical) follow at residues Met-1 to Gln-21, Ser-63 to Ser-83, Phe-98 to Leu-118, Leu-119 to Trp-139, Phe-152 to Ile-172, Ile-197 to Leu-217, Pro-227 to Ile-247, Leu-261 to Val-281, Ala-288 to Ser-308, Asn-314 to Ala-334, Ile-355 to Pro-375, Leu-389 to Ile-409, and Leu-443 to Leu-463.

It belongs to the complex I subunit 4 family.

The protein resides in the mitochondrion membrane. It catalyses the reaction a ubiquinone + NADH + 5 H(+)(in) = a ubiquinol + NAD(+) + 4 H(+)(out). Its function is as follows. Core subunit of the mitochondrial membrane respiratory chain NADH dehydrogenase (Complex I) that is believed to belong to the minimal assembly required for catalysis. Complex I functions in the transfer of electrons from NADH to the respiratory chain. The immediate electron acceptor for the enzyme is believed to be ubiquinone. This is NADH-ubiquinone oxidoreductase chain 4 (ND4) from Paracentrotus lividus (Common sea urchin).